Here is an 86-residue protein sequence, read N- to C-terminus: Small ribosomal subunit protein bS20 (86 aa).

The protein belongs to the bacterial ribosomal protein bS20 family.

Binds directly to 16S ribosomal RNA. This Sulfurimonas denitrificans (strain ATCC 33889 / DSM 1251) (Thiomicrospira denitrificans (strain ATCC 33889 / DSM 1251)) protein is Small ribosomal subunit protein bS20.